The sequence spans 125 residues: Small ribosomal subunit protein bS6m (125 aa).

This sequence belongs to the bacterial ribosomal protein bS6 family. Component of the mitochondrial small ribosomal subunit (mt-SSU). Mature mammalian 55S mitochondrial ribosomes consist of a small (28S) and a large (39S) subunit. The 28S small subunit contains a 12S ribosomal RNA (12S mt-rRNA) and 30 different proteins. The 39S large subunit contains a 16S rRNA (16S mt-rRNA), a copy of mitochondrial valine transfer RNA (mt-tRNA(Val)), which plays an integral structural role, and 52 different proteins.

It localises to the mitochondrion. In Homo sapiens (Human), this protein is Small ribosomal subunit protein bS6m (MRPS6).